Reading from the N-terminus, the 107-residue chain is Putative pterin-4-alpha-carbinolamine dehydratase (107 aa).

The protein belongs to the pterin-4-alpha-carbinolamine dehydratase family.

The enzyme catalyses (4aS,6R)-4a-hydroxy-L-erythro-5,6,7,8-tetrahydrobiopterin = (6R)-L-erythro-6,7-dihydrobiopterin + H2O. The protein is Putative pterin-4-alpha-carbinolamine dehydratase of Rubrobacter xylanophilus (strain DSM 9941 / JCM 11954 / NBRC 16129 / PRD-1).